Reading from the N-terminus, the 286-residue chain is Probable biotin transporter (286 aa).

2 EamA domains span residues 3–128 and 139–277; these read YLLF…AIIR and GFLL…LWVN. A run of 10 helical transmembrane segments spans residues 4 to 24, 26 to 46, 56 to 76, 81 to 101, 109 to 129, 136 to 156, 174 to 194, 203 to 223, 234 to 254, and 258 to 280; these read LLFV…YLAG, VDSY…FLPL, FVGG…VCLY, VLTV…VALF, FNFW…IIRY, FLQG…GQVL, FGYF…LFGD, LQWG…QFWW, TLAV…LLIW, and ADLP…NRLG.

The protein belongs to the drug/metabolite transporter (DMT) superfamily. 10 TMS drug/metabolite exporter (DME) (TC 2.A.7.3) family.

The protein localises to the cell inner membrane. It catalyses the reaction biotin(in) = biotin(out). Its function is as follows. Uptake of biotin. This is Probable biotin transporter from Pseudomonas aeruginosa (strain ATCC 15692 / DSM 22644 / CIP 104116 / JCM 14847 / LMG 12228 / 1C / PRS 101 / PAO1).